A 340-amino-acid polypeptide reads, in one-letter code: SH2 domain-containing adapter protein D (340 aa).

Disordered stretches follow at residues 1–77 (MAKW…PKHR), 94–186 (GGPG…QPWE), and 198–230 (VQFD…ERVD). A compositionally biased stretch (acidic residues) spans 98–108 (EELEADTEYLD). Basic and acidic residues predominate over residues 171-186 (PQEDERPADEYDQPWE). Positions 240–335 (WFHGPLNRAD…AEHLALLYPV (96 aa)) constitute an SH2 domain.

In terms of processing, tyrosine phosphorylated by ABL.

In terms of biological role, may function as an adapter protein. The polypeptide is SH2 domain-containing adapter protein D (SHD) (Homo sapiens (Human)).